Here is a 618-residue protein sequence, read N- to C-terminus: Probable Xaa-Pro aminopeptidase P (618 aa).

Mn(2+) is bound by residues aspartate 414, aspartate 425, glutamate 523, and glutamate 537.

Belongs to the peptidase M24B family. Mn(2+) is required as a cofactor.

It carries out the reaction Release of any N-terminal amino acid, including proline, that is linked to proline, even from a dipeptide or tripeptide.. Functionally, catalyzes the removal of a penultimate prolyl residue from the N-termini of peptides. The polypeptide is Probable Xaa-Pro aminopeptidase P (AMPP) (Metarhizium robertsii (strain ARSEF 23 / ATCC MYA-3075) (Metarhizium anisopliae (strain ARSEF 23))).